The following is a 187-amino-acid chain: Inner membrane-spanning protein YciB (187 aa).

The next 5 membrane-spanning stretches (helical) occupy residues 22–42 (IYVA…VTYA), 50–70 (MQLI…FFHD), 80–100 (IIYV…KSVV), 118–138 (INWA…YIAY), and 148–168 (FKVF…GVYI).

The protein belongs to the YciB family.

It localises to the cell inner membrane. Its function is as follows. Plays a role in cell envelope biogenesis, maintenance of cell envelope integrity and membrane homeostasis. The polypeptide is Inner membrane-spanning protein YciB (Vibrio parahaemolyticus serotype O3:K6 (strain RIMD 2210633)).